The primary structure comprises 144 residues: uncharacterized protein (144 aa).

Residues 25–47 (LTLLDGCCVALVLALTAWSGFFV) traverse the membrane as a helical segment.

It is found in the membrane. This is an uncharacterized protein from Treponema pallidum (strain Nichols).